Reading from the N-terminus, the 423-residue chain is Imidazolonepropionase (423 aa).

Fe(3+)-binding residues include histidine 87 and histidine 89. Zn(2+) contacts are provided by histidine 87 and histidine 89. 3 residues coordinate 4-imidazolone-5-propanoate: arginine 96, tyrosine 159, and histidine 192. Residue tyrosine 159 participates in N-formimidoyl-L-glutamate binding. Fe(3+) is bound at residue histidine 257. Position 257 (histidine 257) interacts with Zn(2+). Glutamate 260 is a binding site for 4-imidazolone-5-propanoate. Aspartate 331 is a binding site for Fe(3+). Aspartate 331 contacts Zn(2+). N-formimidoyl-L-glutamate contacts are provided by asparagine 333 and glycine 335. Serine 336 serves as a coordination point for 4-imidazolone-5-propanoate.

The protein belongs to the metallo-dependent hydrolases superfamily. HutI family. Requires Zn(2+) as cofactor. Fe(3+) serves as cofactor.

It localises to the cytoplasm. The catalysed reaction is 4-imidazolone-5-propanoate + H2O = N-formimidoyl-L-glutamate. It participates in amino-acid degradation; L-histidine degradation into L-glutamate; N-formimidoyl-L-glutamate from L-histidine: step 3/3. Functionally, catalyzes the hydrolytic cleavage of the carbon-nitrogen bond in imidazolone-5-propanoate to yield N-formimidoyl-L-glutamate. It is the third step in the universal histidine degradation pathway. In Porphyromonas gingivalis (strain ATCC BAA-308 / W83), this protein is Imidazolonepropionase.